The primary structure comprises 258 residues: Glutathione S-transferase DHAR3, chloroplastic (258 aa).

Residues 1–42 (MISLRFQPSTTAGVLSASVSRAGFIKRCGSTKPGRVGRFVTM) constitute a chloroplast transit peptide. At Cys-52 the chain carries S-glutathionyl cysteine. Residues Lys-54 and Asp-65 each coordinate glutathione. Lys-54 and Asp-65 together coordinate L-ascorbate. The 74-residue stretch at 56–129 (SITTPNKLGD…DVITQALEEK (74 aa)) folds into the GST N-terminal domain. The active-site Nucleophile is the Cys-66. Cys-66 and Cys-69 are disulfide-bonded. The Glutathione-binding motif lies at 66–71 (CPFCQK). Glutathione contacts are provided by Lys-93, Val-106, Ser-119, His-205, and Trp-252. The region spanning 130-258 (YPEPPLATPP…IAGWRPKVMG (129 aa)) is the GST C-terminal domain. Lys-255 serves as a coordination point for L-ascorbate.

The protein belongs to the GST superfamily. DHAR family. As to quaternary structure, monomer. Interacts with TRX3. In terms of processing, partial S-glutathionylation and intramolecular disulfide bond formation between Cys-66 and Cys-69 in the presence of oxidized glutathione (GSSG). Could be reduced by TRX-dependent process.

The protein localises to the plastid. It is found in the chloroplast stroma. The enzyme catalyses RX + glutathione = an S-substituted glutathione + a halide anion + H(+). It catalyses the reaction L-dehydroascorbate + 2 glutathione = glutathione disulfide + L-ascorbate. Displays a dual function. As a soluble protein, exhibits glutathione-dependent thiol transferase and dehydroascorbate (DHA) reductase activities. Key component of the ascorbate recycling system. Involved in the redox homeostasis, especially in scavenging of ROS under oxidative stresses. The polypeptide is Glutathione S-transferase DHAR3, chloroplastic (DHAR3) (Arabidopsis thaliana (Mouse-ear cress)).